Reading from the N-terminus, the 109-residue chain is Large ribosomal subunit protein uL22 (109 aa).

This sequence belongs to the universal ribosomal protein uL22 family. As to quaternary structure, part of the 50S ribosomal subunit.

In terms of biological role, this protein binds specifically to 23S rRNA; its binding is stimulated by other ribosomal proteins, e.g. L4, L17, and L20. It is important during the early stages of 50S assembly. It makes multiple contacts with different domains of the 23S rRNA in the assembled 50S subunit and ribosome. Its function is as follows. The globular domain of the protein is located near the polypeptide exit tunnel on the outside of the subunit, while an extended beta-hairpin is found that lines the wall of the exit tunnel in the center of the 70S ribosome. The protein is Large ribosomal subunit protein uL22 of Polaromonas sp. (strain JS666 / ATCC BAA-500).